A 452-amino-acid polypeptide reads, in one-letter code: Deoxybrevianamide E synthase notF (452 aa).

Residues 1 to 19 (MTAPELRVDTFRAPEDAPK) show a composition bias toward basic and acidic residues. The segment at 1 to 38 (MTAPELRVDTFRAPEDAPKEPSAQQPRLPSSPSPAQAL) is disordered. A compositionally biased stretch (low complexity) spans 21–38 (PSAQQPRLPSSPSPAQAL). Glutamate 108 lines the brevianamide F pocket. Dimethylallyl diphosphate-binding residues include arginine 122, lysine 212, tyrosine 214, lysine 282, tyrosine 284, tyrosine 371, tyrosine 436, and tyrosine 440.

The protein belongs to the tryptophan dimethylallyltransferase family. In terms of assembly, monomer.

The catalysed reaction is brevianamide F + dimethylallyl diphosphate = deoxybrevianamide E + diphosphate. The protein operates within alkaloid biosynthesis. Its activity is regulated as follows. Addition of 5 mM Mg(2+), Ca(2+) or Mn(2+) slightly enhances catalysis (about 100-120%). Significant reduction of enzyme activity (2%-35%) is observed with Cu(2+), Zn(2+), Fe(2+), or Sn(2+) (5 mM). Its function is as follows. Deoxybrevianamide E synthase; part of the gene cluster that mediates the biosynthesis of notoamide, a fungal indole alkaloid that belongs to a family of natural products containing a characteristic bicyclo[2.2.2]diazaoctane core. The first step of notoamide biosynthesis involves coupling of L-proline and L-tryptophan by the bimodular NRPS notE, to produce cyclo-L-tryptophan-L-proline called brevianamide F. The reverse prenyltransferase notF then acts as a deoxybrevianamide E synthase and converts brevianamide F to deoxybrevianamide E via reverse prenylation at C-2 of the indole ring leading to the bicyclo[2.2.2]diazaoctane core. Deoxybrevianamide E is further hydroxylated at C-6 of the indole ring, likely catalyzed by the cytochrome P450 monooxygenase notG, to yield 6-hydroxy-deoxybrevianamide E. 6-hydroxy-deoxybrevianamide E is a specific substrate of the prenyltransferase notC for normal prenylation at C-7 to produce 6-hydroxy-7-prenyl-deoxybrevianamide, also called notoamide S. As the proposed pivotal branching point in notoamide biosynthesis, notoamide S can be diverted to notoamide E through an oxidative pyran ring closure putatively catalyzed by either notH cytochrome P450 monooxygenase or the notD FAD-linked oxidoreductase. This step would be followed by an indole 2,3-epoxidation-initiated pinacol-like rearrangement catalyzed by the notB FAD-dependent monooxygenase leading to the formation of notoamide C and notoamide D. On the other hand notoamide S is converted to notoamide T by notH (or notD), a bifunctional oxidase that also functions as the intramolecular Diels-Alderase responsible for generation of (+)-notoamide T. To generate antipodal (-)-notoaminide T, notH' (or notD') in Aspergillus versicolor is expected to catalyze a Diels-Alder reaction leading to the opposite stereochemistry. The remaining oxidoreductase notD (or notH) likely catalyzes the oxidative pyran ring formation to yield (+)-stephacidin A. The FAD-dependent monooxygenase notI is highly similar to notB and is predicted to catalyze a similar conversion from (+)-stephacidin A to (-)-notoamide B via the 2,3-epoxidation of (+)-stephacidin A followed by a pinacol-type rearrangement. Finally, it remains unclear which enzyme could be responsible for the final hydroxylation steps leading to notoamide A and sclerotiamide. This chain is Deoxybrevianamide E synthase notF, found in Aspergillus sp. (strain MF297-2).